Reading from the N-terminus, the 254-residue chain is 3-deoxy-manno-octulosonate cytidylyltransferase (254 aa).

The protein belongs to the KdsB family.

The protein localises to the cytoplasm. The enzyme catalyses 3-deoxy-alpha-D-manno-oct-2-ulosonate + CTP = CMP-3-deoxy-beta-D-manno-octulosonate + diphosphate. The protein operates within nucleotide-sugar biosynthesis; CMP-3-deoxy-D-manno-octulosonate biosynthesis; CMP-3-deoxy-D-manno-octulosonate from 3-deoxy-D-manno-octulosonate and CTP: step 1/1. Its pathway is bacterial outer membrane biogenesis; lipopolysaccharide biosynthesis. In terms of biological role, activates KDO (a required 8-carbon sugar) for incorporation into bacterial lipopolysaccharide in Gram-negative bacteria. The polypeptide is 3-deoxy-manno-octulosonate cytidylyltransferase (Pseudomonas entomophila (strain L48)).